Reading from the N-terminus, the 447-residue chain is Glutamate-1-semialdehyde 2,1-aminomutase (447 aa).

Lysine 272 is subject to N6-(pyridoxal phosphate)lysine.

Belongs to the class-III pyridoxal-phosphate-dependent aminotransferase family. HemL subfamily. Homodimer. It depends on pyridoxal 5'-phosphate as a cofactor.

The protein localises to the cytoplasm. It carries out the reaction (S)-4-amino-5-oxopentanoate = 5-aminolevulinate. It functions in the pathway porphyrin-containing compound metabolism; protoporphyrin-IX biosynthesis; 5-aminolevulinate from L-glutamyl-tRNA(Glu): step 2/2. The chain is Glutamate-1-semialdehyde 2,1-aminomutase from Leifsonia xyli subsp. xyli (strain CTCB07).